Here is a 1749-residue protein sequence, read N- to C-terminus: E3 ubiquitin-protein ligase UBR1 (1749 aa).

At A2 the chain carries N-acetylalanine. T21 bears the Phosphothreonine mark. The UBR-type zinc-finger motif lies at 97–168; sequence QLCGRVFKSG…TGPFCVNHEP (72 aa). Positions 99, 112, 115, 124, 127, 133, and 136 each coordinate Zn(2+). F148 is a binding site for a peptide. C149 lines the Zn(2+) pocket. Position 150 (D150) interacts with a peptide. C151 is a Zn(2+) binding site. D153 is an a peptide binding site. 2 residues coordinate Zn(2+): C163 and H166. The segment at 842–868 is disordered; that stretch reads QHSKAEHMQKKRRKQENKDEALPPPPP. A UBC2-binding region (U2BR) region spans residues 1019–1054; sequence RKRKAEAARLHRQKIMAQMSALQKNFIETHKLMYDN. Residues C1098, C1101, C1159, H1161, H1164, and C1167 each coordinate Zn(2+). The RING-type; atypical zinc finger occupies 1098 to 1201; sequence CILCQEEQEV…SGEYLCPLCK (104 aa). S1179 is subject to Phosphoserine. 5 residues coordinate Zn(2+): C1197, C1200, C1627, C1630, and C1653.

It belongs to the E3 ubiquitin-protein ligase UBR1-like family. In terms of assembly, interacts with RECQL4. As to expression, broadly expressed, with highest levels in skeletal muscle, kidney and pancreas. Present in acinar cells of the pancreas (at protein level).

It localises to the cytoplasm. The protein localises to the cytosol. It catalyses the reaction S-ubiquitinyl-[E2 ubiquitin-conjugating enzyme]-L-cysteine + [acceptor protein]-L-lysine = [E2 ubiquitin-conjugating enzyme]-L-cysteine + N(6)-ubiquitinyl-[acceptor protein]-L-lysine.. The protein operates within protein modification; protein ubiquitination. Inhibited by the small-molecule compound RF-C11, which bears two heterovalent ligands: RF-C11 inhibits activity toward both type-1 and type-2 N-degrons. In terms of biological role, E3 ubiquitin-protein ligase which is a component of the N-end rule pathway. Recognizes and binds proteins bearing specific N-terminal residues that are destabilizing according to the N-end rule, leading to their ubiquitination and subsequent degradation. Recognizes both type-1 and type-2 N-degrons, containing positively charged amino acids (Arg, Lys and His) and bulky and hydrophobic amino acids, respectively. Does not ubiquitinate proteins that are acetylated at the N-terminus. In contrast, it strongly binds methylated N-degrons. Binds leucine and is a negative regulator of the leucine-mTOR signaling pathway, thereby controlling cell growth. The polypeptide is E3 ubiquitin-protein ligase UBR1 (Homo sapiens (Human)).